A 240-amino-acid chain; its full sequence is Homeobox protein DLX-4 (240 aa).

Disordered regions lie at residues 44–70 (DLSY…DSYL) and 175–194 (LKQS…PSLS). Positions 116–175 (LRKPRTIYSSLQLQHLNQRFQHTQYLALPERAQLAAQLGLTQTQVKIWFQNKRSKYKKLL) form a DNA-binding region, homeobox.

It belongs to the distal-less homeobox family. In terms of tissue distribution, branchial arches, molar and incisor teeth and limbs.

It is found in the nucleus. Its function is as follows. May play a role in determining the production of hemoglobin S. May act as a repressor. During embryonic development, plays a role in palatogenesis. The sequence is that of Homeobox protein DLX-4 (Dlx4) from Mus musculus (Mouse).